Reading from the N-terminus, the 263-residue chain is Ribonuclease HII (263 aa).

The region spanning glutamine 71–asparagine 262 is the RNase H type-2 domain. A divalent metal cation contacts are provided by aspartate 77, glutamate 78, and aspartate 172.

It belongs to the RNase HII family. Mn(2+) is required as a cofactor. It depends on Mg(2+) as a cofactor.

It is found in the cytoplasm. The enzyme catalyses Endonucleolytic cleavage to 5'-phosphomonoester.. Endonuclease that specifically degrades the RNA of RNA-DNA hybrids. The chain is Ribonuclease HII from Streptococcus pyogenes serotype M2 (strain MGAS10270).